The primary structure comprises 312 residues: uncharacterized protein (312 aa).

Residues Ser-200, Asp-261, and His-292 each act as charge relay system in the active site.

It belongs to the AB hydrolase superfamily. AB hydrolase 2 family.

This is an uncharacterized protein from Acanthamoeba polyphaga mimivirus (APMV).